Consider the following 285-residue polypeptide: Methanethiol S-methyltransferase 1 (285 aa).

Helical transmembrane passes span 55–75 (AYLVFFVTILYAIGFVMGLVV), 88–108 (AEAVIINLLLMALFAVQHSVM), 132–152 (LFASLSLLLLFWQWRPLPTVI), 162–182 (VTLVTVSFAGWVLVFTSTFII), and 224–244 (FIVAFWAAPVMTAGHLLFAAV).

This sequence belongs to the nurim family.

Its subcellular location is the membrane. The catalysed reaction is methanethiol + S-adenosyl-L-methionine = dimethyl sulfide + S-adenosyl-L-homocysteine + H(+). Its function is as follows. Catalyzes the methylation of methanethiol (MeSH) to yield dimethylsulphide (DMS). This is Methanethiol S-methyltransferase 1 from Bradyrhizobium diazoefficiens (strain JCM 10833 / BCRC 13528 / IAM 13628 / NBRC 14792 / USDA 110).